Here is a 354-residue protein sequence, read N- to C-terminus: DNA polymerase IV (354 aa).

The 182-residue stretch at 8 to 189 (IIHVDMDCFY…LPLEKIPGVG (182 aa)) folds into the UmuC domain. Mg(2+)-binding residues include aspartate 12 and aspartate 107. Glutamate 108 is an active-site residue.

The protein belongs to the DNA polymerase type-Y family. In terms of assembly, monomer. Requires Mg(2+) as cofactor.

The protein resides in the cytoplasm. It catalyses the reaction DNA(n) + a 2'-deoxyribonucleoside 5'-triphosphate = DNA(n+1) + diphosphate. Functionally, poorly processive, error-prone DNA polymerase involved in untargeted mutagenesis. Copies undamaged DNA at stalled replication forks, which arise in vivo from mismatched or misaligned primer ends. These misaligned primers can be extended by PolIV. Exhibits no 3'-5' exonuclease (proofreading) activity. May be involved in translesional synthesis, in conjunction with the beta clamp from PolIII. The protein is DNA polymerase IV of Vibrio parahaemolyticus serotype O3:K6 (strain RIMD 2210633).